Here is a 373-residue protein sequence, read N- to C-terminus: Homoserine O-acetyltransferase (373 aa).

The region spanning 52 to 356 (NVVMVLHALT…VYGHDGFLVE (305 aa)) is the AB hydrolase-1 domain. The active-site Nucleophile is Ser157. Arg227 is a binding site for substrate. Residues Asp320 and His350 contribute to the active site. Asp351 contacts substrate.

The protein belongs to the AB hydrolase superfamily. MetX family. In terms of assembly, homodimer.

It localises to the cytoplasm. The catalysed reaction is L-homoserine + acetyl-CoA = O-acetyl-L-homoserine + CoA. It functions in the pathway amino-acid biosynthesis; L-methionine biosynthesis via de novo pathway; O-acetyl-L-homoserine from L-homoserine: step 1/1. Transfers an acetyl group from acetyl-CoA to L-homoserine, forming acetyl-L-homoserine. This is Homoserine O-acetyltransferase from Mycobacterium sp. (strain KMS).